A 127-amino-acid chain; its full sequence is Large ribosomal subunit protein bL19 (127 aa).

Belongs to the bacterial ribosomal protein bL19 family.

Functionally, this protein is located at the 30S-50S ribosomal subunit interface and may play a role in the structure and function of the aminoacyl-tRNA binding site. The chain is Large ribosomal subunit protein bL19 from Bradyrhizobium sp. (strain BTAi1 / ATCC BAA-1182).